A 410-amino-acid chain; its full sequence is 3-phosphoshikimate 1-carboxyvinyltransferase (410 aa).

Lys20, Ser21, and Arg25 together coordinate 3-phosphoshikimate. Lys20 is a phosphoenolpyruvate binding site. Residue Arg115 participates in phosphoenolpyruvate binding. 3-phosphoshikimate is bound by residues Ser157, Ser158, Gln159, Ser183, Asp293, and Lys320. Gln159 provides a ligand contact to phosphoenolpyruvate. Asp293 (proton acceptor) is an active-site residue. Phosphoenolpyruvate is bound by residues Arg324, Arg365, and Lys391.

The protein belongs to the EPSP synthase family. In terms of assembly, monomer.

Its subcellular location is the cytoplasm. The enzyme catalyses 3-phosphoshikimate + phosphoenolpyruvate = 5-O-(1-carboxyvinyl)-3-phosphoshikimate + phosphate. It participates in metabolic intermediate biosynthesis; chorismate biosynthesis. In terms of biological role, catalyzes the transfer of the enolpyruvyl moiety of phosphoenolpyruvate (PEP) to the 5-hydroxyl of shikimate-3-phosphate (S3P) to produce enolpyruvyl shikimate-3-phosphate and inorganic phosphate. The sequence is that of 3-phosphoshikimate 1-carboxyvinyltransferase from Thermoplasma acidophilum (strain ATCC 25905 / DSM 1728 / JCM 9062 / NBRC 15155 / AMRC-C165).